We begin with the raw amino-acid sequence, 146 residues long: 3-dehydroquinate dehydratase (146 aa).

Catalysis depends on Tyr22, which acts as the Proton acceptor. Substrate-binding residues include Asn73, His79, and Asp86. His101 acts as the Proton donor in catalysis. Residues 102–103 and Arg112 contribute to the substrate site; that span reads IS.

Belongs to the type-II 3-dehydroquinase family. Homododecamer.

The catalysed reaction is 3-dehydroquinate = 3-dehydroshikimate + H2O. The protein operates within metabolic intermediate biosynthesis; chorismate biosynthesis; chorismate from D-erythrose 4-phosphate and phosphoenolpyruvate: step 3/7. Functionally, catalyzes a trans-dehydration via an enolate intermediate. The polypeptide is 3-dehydroquinate dehydratase (aroQ) (Corynebacterium pseudotuberculosis (strain C231)).